A 628-amino-acid polypeptide reads, in one-letter code: Probable alpha-L-arabinofuranosidase A (628 aa).

Residues 1–25 form the signal peptide; it reads MVAFSALSGVSAVSLLLSLVQNAHG. Asn36, Asn51, Asn74, Asn152, Asn171, Asn260, Asn359, Asn440, Asn493, and Asn610 each carry an N-linked (GlcNAc...) asparagine glycan.

It belongs to the glycosyl hydrolase 51 family.

It localises to the secreted. It carries out the reaction Hydrolysis of terminal non-reducing alpha-L-arabinofuranoside residues in alpha-L-arabinosides.. The protein operates within glycan metabolism; L-arabinan degradation. Its function is as follows. Alpha-L-arabinofuranosidase involved in the degradation of arabinoxylan, a major component of plant hemicellulose. Acts only on small linear 1,5-alpha-linked L-arabinofuranosyl oligosaccharides. This is Probable alpha-L-arabinofuranosidase A (abfA) from Aspergillus niger (strain ATCC MYA-4892 / CBS 513.88 / FGSC A1513).